Consider the following 311-residue polypeptide: Prohibitin-2 (311 aa).

Residues 39-57 (GAGMGLAGLVLLGGAAFVA) traverse the membrane as a helical segment. Positions 141-144 (YRTL) match the AIM motif.

This sequence belongs to the prohibitin family. In terms of assembly, the mitochondrial prohibitin complex consists of two subunits (PHB1 and PHB2). The subunits assemble into a membrane-associated ring-shaped supercomplex of approximately 1 mDa. Interacts with ATG24/SNX4; the interaction is direct and plays a role in mitophagy.

It localises to the mitochondrion inner membrane. Functionally, prohibitin probably acts as a holdase/unfoldase for the stabilization of newly synthesized mitochondrial proteins. Involved in mitophagy. Required for the switch to necrotrophic growth. The polypeptide is Prohibitin-2 (Colletotrichum higginsianum (strain IMI 349063) (Crucifer anthracnose fungus)).